The chain runs to 179 residues: Putative 5'(3')-deoxyribonucleotidase (179 aa).

Residue Asp9 is the Nucleophile of the active site. Positions 9, 11, and 135 each coordinate Mg(2+). Asp11 acts as the Proton donor in catalysis.

The protein belongs to the 5'(3')-deoxyribonucleotidase family. The cofactor is Mg(2+).

Functionally, dephosphorylates the 5' and 2'(3')-phosphates of deoxyribonucleotides. The chain is Putative 5'(3')-deoxyribonucleotidase from Staphylococcus epidermidis (strain ATCC 35984 / DSM 28319 / BCRC 17069 / CCUG 31568 / BM 3577 / RP62A).